The chain runs to 616 residues: Cleavage stimulation factor subunit 2 tau variant (616 aa).

In terms of domain architecture, RRM spans 16–94; sequence RSVFVGNIPY…RALRVDNAAS (79 aa). Disordered stretches follow at residues 203-241 and 262-418; these read GKSQ…QPQH and IPAP…SRAM. 2 stretches are compositionally biased toward low complexity: residues 223–233 and 319–331; these read PGPNVLLNQQN and VTPG…GLLG. At T320 the chain carries Phosphothreonine. A compositionally biased stretch (basic and acidic residues) spans 368–381; sequence SGHDTRGPSSHEMR. One copy of the 1-1 repeat lies at 418–422; that stretch reads METRA. Positions 418-462 are 9 X 5 AA tandem repeats of M-E-T-R-[AG]; it reads METRAMETEVLETRVMERRGMETCAMETRGMEARGMDARGLEMRG. The stretch at 423-427 is one 1-2; approximate repeat; that stretch reads METEV. A 1-3; approximate repeat occupies 428-432; sequence LETRV. The 1-4; approximate repeat unit spans residues 433–437; it reads MERRG. The 1-5; approximate repeat unit spans residues 438–442; that stretch reads METCA. Residues 443 to 447 form a 1-6 repeat; sequence METRG. Residues 448-452 form a 1-7; approximate repeat; it reads MEARG. A 1-8; approximate repeat occupies 453 to 457; it reads MDARG. One copy of the 1-9; approximate repeat lies at 458–462; that stretch reads LEMRG. Tandem repeats lie at residues 505 to 509, 510 to 514, 515 to 519, and 520 to 524. A 9 X 5 AA tandem repeats of G-[AT]-G-[MI]-Q region spans residues 505–549; it reads GAGMQGTGIQGTGMQGAGIQGGGMQGAGIQGVSIQGGGIQGGGIQ. A 2-5; approximate repeat occupies 525 to 529; sequence GGGMQ. A 2-6 repeat occupies 530–534; that stretch reads GAGIQ. A 2-7; approximate repeat occupies 535–539; it reads GVSIQ. A 2-8; approximate repeat occupies 540 to 544; sequence GGGIQ. Residues 542-573 are disordered; the sequence is GIQGGGIQGASKQGGSQPSSFSPGQSQVTPQD. One copy of the 2-9; approximate repeat lies at 545–549; that stretch reads GGGIQ. Residues 550-568 show a composition bias toward low complexity; that stretch reads GASKQGGSQPSSFSPGQSQ. Position 563 is a phosphoserine (S563).

The protein localises to the nucleus. May play a significant role in AAUAAA-independent mRNA polyadenylation in germ cells. Directly involved in the binding to pre-mRNAs. The sequence is that of Cleavage stimulation factor subunit 2 tau variant (CSTF2T) from Homo sapiens (Human).